Here is a 65-residue protein sequence, read N- to C-terminus: Ringhalexin (65 aa).

Intrachain disulfides connect Cys-3/Cys-24, Cys-17/Cys-42, Cys-46/Cys-57, and Cys-58/Cys-63.

As to expression, expressed by the venom gland.

It localises to the secreted. Its function is as follows. Has anticoagulant activity, since it is able to inhibit the activation of coagulation factor X (F10) by coagulation factor VIIa (F7) (IC(50)=123.8 nM). Also shows weak irreversible neurotoxicity. This chain is Ringhalexin, found in Hemachatus haemachatus (Rinkhals).